An 84-amino-acid polypeptide reads, in one-letter code: Exodeoxyribonuclease 7 small subunit (84 aa).

It belongs to the XseB family. In terms of assembly, heterooligomer composed of large and small subunits.

It localises to the cytoplasm. It catalyses the reaction Exonucleolytic cleavage in either 5'- to 3'- or 3'- to 5'-direction to yield nucleoside 5'-phosphates.. Functionally, bidirectionally degrades single-stranded DNA into large acid-insoluble oligonucleotides, which are then degraded further into small acid-soluble oligonucleotides. The chain is Exodeoxyribonuclease 7 small subunit from Bartonella henselae (strain ATCC 49882 / DSM 28221 / CCUG 30454 / Houston 1) (Rochalimaea henselae).